The following is a 795-amino-acid chain: Phenylalanine--tRNA ligase beta subunit (795 aa).

A tRNA-binding domain is found at 39–148; sequence AGSFNGVVVG…ADAPLGTDIR (110 aa). The 76-residue stretch at 401–476 folds into the B5 domain; that stretch reads PKRATITLRR…RVYGYNNIPD (76 aa). Mg(2+)-binding residues include D454, D460, E463, and E464. An FDX-ACB domain is found at 701-794; it reads SRFPANRRDI…LKERFQASLR (94 aa).

The protein belongs to the phenylalanyl-tRNA synthetase beta subunit family. Type 1 subfamily. Tetramer of two alpha and two beta subunits. Mg(2+) is required as a cofactor.

Its subcellular location is the cytoplasm. It catalyses the reaction tRNA(Phe) + L-phenylalanine + ATP = L-phenylalanyl-tRNA(Phe) + AMP + diphosphate + H(+). This chain is Phenylalanine--tRNA ligase beta subunit, found in Salmonella choleraesuis (strain SC-B67).